Reading from the N-terminus, the 213-residue chain is Guanylate kinase (213 aa).

The region spanning 10–189 is the Guanylate kinase-like domain; it reads GLLLMVVAPS…AYADLAHIYH (180 aa). 17-24 contacts ATP; that stretch reads APSGVGKT.

It belongs to the guanylate kinase family.

The protein resides in the cytoplasm. It carries out the reaction GMP + ATP = GDP + ADP. In terms of biological role, essential for recycling GMP and indirectly, cGMP. This Caulobacter vibrioides (strain ATCC 19089 / CIP 103742 / CB 15) (Caulobacter crescentus) protein is Guanylate kinase (gmk).